The primary structure comprises 556 residues: 2-isopropylmalate synthase (556 aa).

The Pyruvate carboxyltransferase domain maps to 33-307; that stretch reads PIWCSSDLRD…HPQLDFSDID (275 aa). Mg(2+) contacts are provided by Asp-42, His-246, His-248, and Asn-282. A regulatory domain region spans residues 439–556; the sequence is ATSPYALASH…AVTQAEAKAA (118 aa).

This sequence belongs to the alpha-IPM synthase/homocitrate synthase family. LeuA type 2 subfamily. Homodimer. The cofactor is Mg(2+).

Its subcellular location is the cytoplasm. The enzyme catalyses 3-methyl-2-oxobutanoate + acetyl-CoA + H2O = (2S)-2-isopropylmalate + CoA + H(+). The protein operates within amino-acid biosynthesis; L-leucine biosynthesis; L-leucine from 3-methyl-2-oxobutanoate: step 1/4. In terms of biological role, catalyzes the condensation of the acetyl group of acetyl-CoA with 3-methyl-2-oxobutanoate (2-ketoisovalerate) to form 3-carboxy-3-hydroxy-4-methylpentanoate (2-isopropylmalate). The polypeptide is 2-isopropylmalate synthase (Pseudomonas paraeruginosa (strain DSM 24068 / PA7) (Pseudomonas aeruginosa (strain PA7))).